Here is a 463-residue protein sequence, read N- to C-terminus: Mitochondrial dynamics protein MID51 (463 aa).

The Mitochondrial intermembrane segment spans residues 1–23; that stretch reads MAGAGERKGKKDDNGIGTAIDFV. The chain crosses the membrane as a helical span at residues 24–46; sequence LSNARLVLGVGGAAMLGIATLAV. Over 47–463 the chain is Cytoplasmic; the sequence is KRMYDRAISA…LSEPEVLLQT (417 aa). Positions 49–195 are dimerization; the sequence is MYDRAISAPT…LSGSLYDDLQ (147 aa). Phosphoserine is present on residues Ser55, Ser59, Ser79, and Ser94. Positions 57–77 are disordered; that stretch reads PTSPTRLSHSGKRSWEEPNWM. The interval 160–169 is important for interaction with DNM1L; sequence AAVDICAELR. Ser187, Ser189, and His201 together coordinate ADP. The important for interaction with DNM1L stretch occupies residues 234–243; the sequence is RRENPEYFPR. 3 residues coordinate ADP: Ser340, Arg342, and Lys368.

It belongs to the MID49/MID51 family. Homodimer. Interacts with DNM1L.

Its subcellular location is the mitochondrion outer membrane. In terms of biological role, mitochondrial outer membrane protein which regulates mitochondrial fission/fusion dynamics. Promotes the recruitment and association of the fission mediator dynamin-related protein 1 (DNM1L) to the mitochondrial surface independently of the mitochondrial fission FIS1 and MFF proteins. Regulates DNM1L GTPase activity and DNM1L oligomerization. Binds ADP and can also bind GDP, although with lower affinity. Does not bind CDP, UDP, ATP, AMP or GTP. Inhibits DNM1L GTPase activity in the absence of bound ADP. Requires ADP to stimulate DNM1L GTPase activity and the assembly of DNM1L into long, oligomeric tubules with a spiral pattern, as opposed to the ring-like DNM1L oligomers observed in the absence of bound ADP. Does not require ADP for its function in recruiting DNM1L. The sequence is that of Mitochondrial dynamics protein MID51 (Mief1) from Rattus norvegicus (Rat).